The chain runs to 427 residues: Enolase (427 aa).

Gln163 lines the (2R)-2-phosphoglycerate pocket. Glu205 serves as the catalytic Proton donor. 3 residues coordinate Mg(2+): Asp242, Glu288, and Asp315. 4 residues coordinate (2R)-2-phosphoglycerate: Lys340, Arg369, Ser370, and Lys391. Lys340 acts as the Proton acceptor in catalysis.

Belongs to the enolase family. Requires Mg(2+) as cofactor.

It is found in the cytoplasm. Its subcellular location is the secreted. It localises to the cell surface. It carries out the reaction (2R)-2-phosphoglycerate = phosphoenolpyruvate + H2O. The protein operates within carbohydrate degradation; glycolysis; pyruvate from D-glyceraldehyde 3-phosphate: step 4/5. In terms of biological role, catalyzes the reversible conversion of 2-phosphoglycerate (2-PG) into phosphoenolpyruvate (PEP). It is essential for the degradation of carbohydrates via glycolysis. In Amoebophilus asiaticus (strain 5a2), this protein is Enolase.